The chain runs to 150 residues: Ribonuclease pancreatic delta-type (150 aa).

An N-terminal signal peptide occupies residues 1-25 (MGLEKSLILFSLLVLVLGWVQPSLG). A substrate-binding site is contributed by Arg-35. Catalysis depends on His-37, which acts as the Proton acceptor. 4 cysteine pairs are disulfide-bonded: Cys-51-Cys-110, Cys-65-Cys-121, Cys-83-Cys-136, and Cys-90-Cys-98. Substrate contacts are provided by residues 66–70 (KRVNT), Lys-91, and Arg-111. Residue His-145 is the Proton donor of the active site.

It belongs to the pancreatic ribonuclease family. As to quaternary structure, monomer.

The protein localises to the secreted. The enzyme catalyses an [RNA] containing cytidine + H2O = an [RNA]-3'-cytidine-3'-phosphate + a 5'-hydroxy-ribonucleotide-3'-[RNA].. It catalyses the reaction an [RNA] containing uridine + H2O = an [RNA]-3'-uridine-3'-phosphate + a 5'-hydroxy-ribonucleotide-3'-[RNA].. In terms of biological role, endonuclease that catalyzes the cleavage of RNA on the 3' side of pyrimidine nucleotides. Acts on single-stranded and double-stranded RNA. This Rattus exulans (Polynesian rat) protein is Ribonuclease pancreatic delta-type.